The chain runs to 380 residues: Flap endonuclease 1 (380 aa).

The N-domain stretch occupies residues 1–104 (MGIQGLAKLI…GELAKRAERR (104 aa)). Aspartate 34 serves as a coordination point for Mg(2+). Residues arginine 47 and arginine 70 each contribute to the DNA site. Mg(2+) contacts are provided by aspartate 86, glutamate 158, glutamate 160, aspartate 179, and aspartate 181. Residues 122-253 (DVNKFQKRLV…KRAIELIRQY (132 aa)) are I-domain. Residue glutamate 158 participates in DNA binding. Residues glycine 231 and aspartate 233 each coordinate DNA. Aspartate 233 is a Mg(2+) binding site. A disordered region spans residues 328–380 (LKNARHTSTQGRLDSFFKVMSSPSVKRKEPPKGAKGSASKKAKMSGGKFKKPK). The interaction with PCNA stretch occupies residues 336-344 (TQGRLDSFF). Over residues 365–380 (ASKKAKMSGGKFKKPK) the composition is skewed to basic residues.

The protein belongs to the XPG/RAD2 endonuclease family. FEN1 subfamily. As to quaternary structure, interacts with PCNA. Three molecules of FEN1 bind to one PCNA trimer with each molecule binding to one PCNA monomer. PCNA stimulates the nuclease activity without altering cleavage specificity. The cofactor is Mg(2+). Post-translationally, phosphorylated. Phosphorylation upon DNA damage induces relocalization to the nuclear plasma.

It is found in the nucleus. Its subcellular location is the nucleolus. It localises to the nucleoplasm. The protein resides in the mitochondrion. In terms of biological role, structure-specific nuclease with 5'-flap endonuclease and 5'-3' exonuclease activities involved in DNA replication and repair. During DNA replication, cleaves the 5'-overhanging flap structure that is generated by displacement synthesis when DNA polymerase encounters the 5'-end of a downstream Okazaki fragment. It enters the flap from the 5'-end and then tracks to cleave the flap base, leaving a nick for ligation. Also involved in the long patch base excision repair (LP-BER) pathway, by cleaving within the apurinic/apyrimidinic (AP) site-terminated flap. Acts as a genome stabilization factor that prevents flaps from equilibrating into structures that lead to duplications and deletions. Also possesses 5'-3' exonuclease activity on nicked or gapped double-stranded DNA, and exhibits RNase H activity. Also involved in replication and repair of rDNA and in repairing mitochondrial DNA. In Branchiostoma floridae (Florida lancelet), this protein is Flap endonuclease 1.